The following is a 175-amino-acid chain: uncharacterized protein (175 aa).

To yeast YER187w.

This is an uncharacterized protein from Saccharomyces cerevisiae (strain ATCC 204508 / S288c) (Baker's yeast).